The following is a 57-amino-acid chain: MICYNQQSSEPPTTKTCSEGQCYKKTWSDHRGTIIERGCACPNVKPGVKISCCSSDK.

3 disulfides stabilise this stretch: cysteine 3/cysteine 22, cysteine 17/cysteine 39, and cysteine 41/cysteine 52.

Expressed by the venom gland.

Its subcellular location is the secreted. Produces peripheral paralysis by blocking neuromuscular transmission at the postsynaptic site. Binds to and inhibits the endogenous nicotinic acetylcholine receptors (nAChR). This neurotoxin is lethal to mice by intraperitoneal or intravenous injection. The protein is Three-finger toxin Tschuditoxin-I of Micrurus tschudii (Desert coral snake).